We begin with the raw amino-acid sequence, 411 residues long: Adenylosuccinate synthetase (411 aa).

Residues 11–17 and 39–41 each bind GTP; these read GDEGKGK and GHT. D12 serves as the catalytic Proton acceptor. Positions 12 and 39 each coordinate Mg(2+). IMP contacts are provided by residues 12-15, 37-40, T121, R135, Q215, T230, and R294; these read DEGK and NAGH. The Proton donor role is filled by H40. 290–296 is a binding site for substrate; it reads TTTKRPR. GTP is bound by residues R296, 322-324, and 400-402; these read KLD and STS.

Belongs to the adenylosuccinate synthetase family. As to quaternary structure, homodimer. Mg(2+) is required as a cofactor.

It localises to the cytoplasm. It catalyses the reaction IMP + L-aspartate + GTP = N(6)-(1,2-dicarboxyethyl)-AMP + GDP + phosphate + 2 H(+). It functions in the pathway purine metabolism; AMP biosynthesis via de novo pathway; AMP from IMP: step 1/2. Functionally, plays an important role in the de novo pathway of purine nucleotide biosynthesis. Catalyzes the first committed step in the biosynthesis of AMP from IMP. The polypeptide is Adenylosuccinate synthetase (Helicobacter pylori (strain HPAG1)).